Reading from the N-terminus, the 114-residue chain is Early 4 ORF4 protein (114 aa).

The Nuclear localization signal motif lies at 66-75 (RAKRRDRRRR).

It belongs to the adenoviridae E4 ORF4 family. Interacts with host BAZ1A/ACF1, host PPP2R2A/PP2a-B55alpha subunit, and host PPP2R5E/PP2a-B'B56 subunit. May interact with host SRC. Post-translationally, may be phosphorylated by host SRC kinase.

It is found in the host nucleus. The protein resides in the host cytoplasm. In terms of biological role, plays a role in viral alternative pre-mRNA splicing. Activates dephosphorylation by protein phosphatase 2A of host SR proteins and converts their splicing properties. When expressed alone ex vivo, induces p53/TP53-independent apoptosis called cytoplasmic death. May mimic nutrient/growth signals to activate the host mTOR pathway. The chain is Early 4 ORF4 protein from Homo sapiens (Human).